We begin with the raw amino-acid sequence, 187 residues long: Putative manganese efflux pump MntP (187 aa).

6 helical membrane-spanning segments follow: residues 3–23 (WLTI…VALA), 39–59 (LGFH…LLGM), 65–85 (ISAY…GRMV), 103–123 (GMTM…VGLS), 124–144 (IAML…VAGV), and 166–186 (ICGG…HTLL).

This sequence belongs to the MntP (TC 9.B.29) family.

It is found in the cell inner membrane. In terms of biological role, probably functions as a manganese efflux pump. This chain is Putative manganese efflux pump MntP, found in Geobacter sp. (strain M21).